The sequence spans 388 residues: Pentatricopeptide repeat-containing protein 2, mitochondrial (388 aa).

The PPR repeat unit spans residues 166 to 200 (TSFNILMDMLFIKGKYKSALQVLIEMKNQDVKFTK). Residue serine 382 is modified to Phosphoserine.

Belongs to the PTCD2 family.

Its subcellular location is the mitochondrion. Involved in mitochondrial RNA maturation and mitochondrial respiratory chain function. The chain is Pentatricopeptide repeat-containing protein 2, mitochondrial (PTCD2) from Homo sapiens (Human).